Reading from the N-terminus, the 123-residue chain is Large ribosomal subunit protein uL14 (123 aa).

Belongs to the universal ribosomal protein uL14 family. As to quaternary structure, part of the 50S ribosomal subunit. Forms a cluster with proteins L3 and L19. In the 70S ribosome, L14 and L19 interact and together make contacts with the 16S rRNA in bridges B5 and B8.

Binds to 23S rRNA. Forms part of two intersubunit bridges in the 70S ribosome. The chain is Large ribosomal subunit protein uL14 from Enterobacter sp. (strain 638).